We begin with the raw amino-acid sequence, 122 residues long: Urease subunit beta (122 aa).

This sequence belongs to the urease beta subunit family. Heterotrimer of UreA (gamma), UreB (beta) and UreC (alpha) subunits. Three heterotrimers associate to form the active enzyme.

It is found in the cytoplasm. It carries out the reaction urea + 2 H2O + H(+) = hydrogencarbonate + 2 NH4(+). It participates in nitrogen metabolism; urea degradation; CO(2) and NH(3) from urea (urease route): step 1/1. This Acetivibrio thermocellus (strain ATCC 27405 / DSM 1237 / JCM 9322 / NBRC 103400 / NCIMB 10682 / NRRL B-4536 / VPI 7372) (Clostridium thermocellum) protein is Urease subunit beta.